The chain runs to 341 residues: N-acetyl-gamma-glutamyl-phosphate reductase (341 aa).

C151 is an active-site residue.

It belongs to the NAGSA dehydrogenase family. Type 1 subfamily.

It is found in the cytoplasm. It catalyses the reaction N-acetyl-L-glutamate 5-semialdehyde + phosphate + NADP(+) = N-acetyl-L-glutamyl 5-phosphate + NADPH + H(+). The protein operates within amino-acid biosynthesis; L-arginine biosynthesis; N(2)-acetyl-L-ornithine from L-glutamate: step 3/4. Catalyzes the NADPH-dependent reduction of N-acetyl-5-glutamyl phosphate to yield N-acetyl-L-glutamate 5-semialdehyde. In Chlorobaculum tepidum (strain ATCC 49652 / DSM 12025 / NBRC 103806 / TLS) (Chlorobium tepidum), this protein is N-acetyl-gamma-glutamyl-phosphate reductase.